Consider the following 1262-residue polypeptide: Separin homolog sep-1 (1262 aa).

Positions 957 to 1051 (VQNAYYILDP…SVRTIPQALG (95 aa)) constitute a Peptidase C50 domain. The active site involves Cys1040. The disordered stretch occupies residues 1147–1262 (KDQRNLPQTP…ARTPSRSRNL (116 aa)). Composition is skewed to polar residues over residues 1151–1162 (NLPQTPKTSART) and 1177–1197 (FVTS…NKSP). The span at 1243–1262 (TPTTRTTRSSARTPSRSRNL) shows a compositional bias: low complexity.

As to quaternary structure, forms a complex with securin-like protein ify-1 (via C-terminus). Interaction with ify-1 stabilizes sep-1. Also maintains the complex in the cytoplasm during interphase and recruits it to chromosomes during the first meiotic division. Expressed in oocytes. Expressed in male germline. Expressed in spermatocytes but undetectable in spermatids (at protein level).

The protein resides in the cytoplasm. Its subcellular location is the chromosome. It localises to the cytoplasmic granule. It is found in the cytoskeleton. The protein localises to the microtubule organizing center. The protein resides in the centrosome. Its subcellular location is the spindle. It localises to the cleavage furrow. It is found in the midbody. It carries out the reaction All bonds known to be hydrolyzed by this endopeptidase have arginine in P1 and an acidic residue in P4. P6 is often occupied by an acidic residue or by a hydroxy-amino-acid residue, the phosphorylation of which enhances cleavage.. Probably maintained in an inactive state via its interaction with securin ify-1 which acts as a pseudosubstrate thereby blocking access to the catalytic site. Upon ify-1 degradation at the onset of anaphase, sep-1 is likely to become active. In addition, interaction with ify-1 stabilizes sep-1. Functionally, cysteine protease, which plays a central role in homologous chromosome separation during meiosis I and in sister chromatid separation during embryonic mitosis. Promotes chromosome/sister chromatid segregation by cleaving the scc-1 (mitosis) and rec-8 (meiosis) subunits of the cohesin complex at the onset of anaphase. May cleave histone H3-like protein cpar-1 during meiosis I metaphase-anaphase transition. Promotes cortical granule exocytosis after oocyte fertilization during the first meiotic anaphase. Essential for embryonic cytokinesis by regulating rab-11-positive vesicle trafficking at the plasma membrane at the cleavage furrow and midbody. Regulates centriole segregation during spermatocyte meiosis. Required for embryonic anterior-posterior axis formation. In Caenorhabditis elegans, this protein is Separin homolog sep-1.